The sequence spans 464 residues: 3-ketoacyl-CoA synthase 19 (464 aa).

The chain crosses the membrane as a helical span at residues 3 to 25; sequence LFSLSSLLLLSTLFVFYIFKFVF. Residues 24–318 form the FAE domain; that stretch reads VFKRRNQRNC…AIVRALKRRT (295 aa). Residues C172, H251, H339, H343, H372, and N376 contribute to the active site.

The protein belongs to the thiolase-like superfamily. Chalcone/stilbene synthases family. Expressed in siliques.

The protein resides in the membrane. The enzyme catalyses a very-long-chain acyl-CoA + malonyl-CoA + H(+) = a very-long-chain 3-oxoacyl-CoA + CO2 + CoA. It functions in the pathway lipid metabolism; fatty acid biosynthesis. This is 3-ketoacyl-CoA synthase 19 from Arabidopsis thaliana (Mouse-ear cress).